The sequence spans 235 residues: Dual specificity protein phosphatase 15 (235 aa).

The N-myristoyl glycine moiety is linked to residue G2. The Tyrosine-protein phosphatase domain occupies 4–144; sequence GMTKVLPGLY…LEEFGWANSQ (141 aa). Catalysis depends on C88, which acts as the Phosphocysteine intermediate. Residues 183–193 show a composition bias toward low complexity; that stretch reads AASATTASSAA. The disordered stretch occupies residues 183-212; it reads AASATTASSAAEGTLQRLVPRSPRDSHQPL.

This sequence belongs to the protein-tyrosine phosphatase family. Non-receptor class dual specificity subfamily. In terms of tissue distribution, isoform 1 is expressed in testis; predominantly in developing spermatocytes (at protein level). Isoform 2 is highly expressed in testis. Expressed in spinal cord and specifically in oligodendroglial cells. Expressed in embryonic brain cortex; down-regulated in mice with experimental autoimmune encephalomyelitis (EAE).

The protein resides in the cell membrane. It catalyses the reaction O-phospho-L-tyrosyl-[protein] + H2O = L-tyrosyl-[protein] + phosphate. The enzyme catalyses O-phospho-L-seryl-[protein] + H2O = L-seryl-[protein] + phosphate. The catalysed reaction is O-phospho-L-threonyl-[protein] + H2O = L-threonyl-[protein] + phosphate. May dephosphorylate MAPK13, ATF2, ERBB3, PDGFRB and SNX6. Functionally, may play a role in the regulation of oligodendrocyte differentiation. May play a role in the regulation of myelin formation. Involved in the regulation of Erk1/2 phosphorylation in Schwann cells; the signaling may be linked to the regulation of myelination. The sequence is that of Dual specificity protein phosphatase 15 from Mus musculus (Mouse).